We begin with the raw amino-acid sequence, 892 residues long: Putative ubiquitin carboxyl-terminal hydrolase 11 (892 aa).

In terms of domain architecture, DUSP spans 17–132 (YTPEEERRIV…GGPPVPRKLI (116 aa)). The tract at residues 69 to 89 (EPSEVTRPGPIDNHDIIDSES) is disordered. The 580-residue stretch at 301 to 880 (GGLQNLGNTC…AAYVLFYQRV (580 aa)) folds into the USP domain. The active-site Nucleophile is the Cys-310. The disordered stretch occupies residues 636–660 (NSGNENGHVPDESSRSILSRDTETE). Residues 643–657 (HVPDESSRSILSRDT) are compositionally biased toward basic and acidic residues. Residue His-838 is the Proton acceptor of the active site.

It belongs to the peptidase C19 family.

The catalysed reaction is Thiol-dependent hydrolysis of ester, thioester, amide, peptide and isopeptide bonds formed by the C-terminal Gly of ubiquitin (a 76-residue protein attached to proteins as an intracellular targeting signal).. Recognizes and hydrolyzes the peptide bond at the C-terminal Gly of ubiquitin. Involved in the processing of poly-ubiquitin precursors as well as that of ubiquitinated proteins. The chain is Putative ubiquitin carboxyl-terminal hydrolase 11 (UBP11) from Arabidopsis thaliana (Mouse-ear cress).